An 875-amino-acid polypeptide reads, in one-letter code: MSKSTAEIRQAFLDFFHSKGHQVVASSSLVPDNDPTLLFTNAGMNQFKDVFLGLDKRAYSRATTSQRCVRAGGKHNDLENVGYTARHHTFFEMLGNFSFGDYFKHDAISYAWELLTGENWFNLPKERLWVTVYETDDEAFDIWQQQIGVPAERIIRIGDNKGGAFASDNFWQMGDTGPCGPCTEIFYDHGDHIWGGPPGSPEEDGDRYIEIWNLVFMQFNRQSDGTMLPLPKPSVDTGMGLERIAAVLQHVNSNYEIDLFSKLIAAVAKVTGATDLDNKSLRVIADHIRSCAFLVSDGVTPSNEGRGYVLRRIIRRAVRHGNMLGAKDTFFYKLVAPLIEVMGPAADELKRQQSLVEQVLKTEEDQFARTLERGLTLLDEELANLQGDTLDGETAFRLYDTYGFPVDLTADVCRERGLKVDEAGFEQAMEAQRRRARESSGFGADYNSMIRVDGASQFSGYDHEQQQSTVTALFRDGQPVNEIHAGEEAVVVLDETPFYGESGGQVGDKGVLKAANADFEVSDTQKYGQAIGHQGKLSHGSLKVNDRVDAKIDTVRRNRIRLNHSATHLLHAALRQTLGEHVAQKGSLVNDKYLRFDFSHFEAMKPEQIRTVEDLVNQQIRRNLPVQTEVMALDDAKGKGAMALFGEKYDDNVRVLTMGDFSTELCGGTHASRTGDIGLFRILSESGTAAGIRRIEAVTGDGAIATLHQQNDLLQDVAHLVKGDSNNLTDKVRAVLDRTRALEKELQQLKDQQAAQESASLSSKAKMVNGVQLLVSQLDNVEAKMLRTMVDDLKNQLGSAIIVLATTADDKVSLIAGVTKDLTDRVKAGELIGNVAQQVGGKGGGRPDMAQAGGTDVSALPAALDSVEAWVASKL.

Residues His564, His568, Cys666, and His670 each contribute to the Zn(2+) site.

It belongs to the class-II aminoacyl-tRNA synthetase family. In terms of assembly, homotetramer. Zn(2+) is required as a cofactor.

It is found in the cytoplasm. The enzyme catalyses tRNA(Ala) + L-alanine + ATP = L-alanyl-tRNA(Ala) + AMP + diphosphate. Its function is as follows. Catalyzes the attachment of alanine to tRNA(Ala) in a two-step reaction: alanine is first activated by ATP to form Ala-AMP and then transferred to the acceptor end of tRNA(Ala). Also edits incorrectly charged Ser-tRNA(Ala) and Gly-tRNA(Ala) via its editing domain. The protein is Alanine--tRNA ligase of Serratia proteamaculans (strain 568).